A 275-amino-acid chain; its full sequence is Phosphate import ATP-binding protein PstB 1 (275 aa).

In terms of domain architecture, ABC transporter spans 22–261 (LETQAVSVYY…NRTEKIFNSP (240 aa)). ATP is bound at residue 54–61 (GPSGCGKS).

The protein belongs to the ABC transporter superfamily. Phosphate importer (TC 3.A.1.7) family. In terms of assembly, the complex is composed of two ATP-binding proteins (PstB), two transmembrane proteins (PstC and PstA) and a solute-binding protein (PstS).

The protein resides in the cell inner membrane. The catalysed reaction is phosphate(out) + ATP + H2O = ADP + 2 phosphate(in) + H(+). Functionally, part of the ABC transporter complex PstSACB involved in phosphate import. Responsible for energy coupling to the transport system. The chain is Phosphate import ATP-binding protein PstB 1 from Synechococcus sp. (strain JA-2-3B'a(2-13)) (Cyanobacteria bacterium Yellowstone B-Prime).